The chain runs to 347 residues: NADH-ubiquinone oxidoreductase chain 2 (347 aa).

11 consecutive transmembrane segments (helical) span residues 1-21 (MNPM…FIVT), 25-45 (HWFM…PVLM), 59-79 (YFLT…INLM), 96-116 (MLIT…FWVP), 122-142 (VSLP…LSLL), 149-169 (VNMN…GWGG), 178-198 (IMAY…VYNP), 201-221 (SLLN…LLIF), 237-257 (APII…LPPL), 274-294 (NSVI…FFYM), and 326-346 (MLPL…LILL).

This sequence belongs to the complex I subunit 2 family. In terms of assembly, core subunit of respiratory chain NADH dehydrogenase (Complex I) which is composed of 45 different subunits. Interacts with TMEM242.

It localises to the mitochondrion inner membrane. The catalysed reaction is a ubiquinone + NADH + 5 H(+)(in) = a ubiquinol + NAD(+) + 4 H(+)(out). Its function is as follows. Core subunit of the mitochondrial membrane respiratory chain NADH dehydrogenase (Complex I) that is believed to belong to the minimal assembly required for catalysis. Complex I functions in the transfer of electrons from NADH to the respiratory chain. The immediate electron acceptor for the enzyme is believed to be ubiquinone. This chain is NADH-ubiquinone oxidoreductase chain 2, found in Crocidura suaveolens gueldenstaedtii (Gueldenstaedt's shrew).